We begin with the raw amino-acid sequence, 179 residues long: Large ribosomal subunit protein uL5 (179 aa).

The protein belongs to the universal ribosomal protein uL5 family. Part of the 50S ribosomal subunit; part of the 5S rRNA/L5/L18/L25 subcomplex. Contacts the 5S rRNA and the P site tRNA. Forms a bridge to the 30S subunit in the 70S ribosome.

Functionally, this is one of the proteins that bind and probably mediate the attachment of the 5S RNA into the large ribosomal subunit, where it forms part of the central protuberance. In the 70S ribosome it contacts protein S13 of the 30S subunit (bridge B1b), connecting the 2 subunits; this bridge is implicated in subunit movement. Contacts the P site tRNA; the 5S rRNA and some of its associated proteins might help stabilize positioning of ribosome-bound tRNAs. This is Large ribosomal subunit protein uL5 from Haemophilus ducreyi (strain 35000HP / ATCC 700724).